The following is a 159-amino-acid chain: uncharacterized protein (159 aa).

The next 3 helical transmembrane spans lie at 76–96 (AIKY…FIGK), 104–124 (IVML…FSPT), and 131–151 (FGAG…VIGG).

Its subcellular location is the membrane. This is an uncharacterized protein from Acanthamoeba polyphaga (Amoeba).